The following is a 351-amino-acid chain: Uroporphyrinogen decarboxylase (351 aa).

Residues 25-29, Phe43, Asp74, Tyr151, Ser206, and His325 each bind substrate; that span reads RQAGR.

The protein belongs to the uroporphyrinogen decarboxylase family. As to quaternary structure, homodimer.

The protein localises to the cytoplasm. The catalysed reaction is uroporphyrinogen III + 4 H(+) = coproporphyrinogen III + 4 CO2. The protein operates within porphyrin-containing compound metabolism; protoporphyrin-IX biosynthesis; coproporphyrinogen-III from 5-aminolevulinate: step 4/4. Its function is as follows. Catalyzes the decarboxylation of four acetate groups of uroporphyrinogen-III to yield coproporphyrinogen-III. The sequence is that of Uroporphyrinogen decarboxylase from Chlorobaculum tepidum (strain ATCC 49652 / DSM 12025 / NBRC 103806 / TLS) (Chlorobium tepidum).